A 338-amino-acid chain; its full sequence is Ferrochelatase (338 aa).

Residues His-202 and Glu-283 each coordinate Fe cation.

This sequence belongs to the ferrochelatase family.

It is found in the cytoplasm. The enzyme catalyses heme b + 2 H(+) = protoporphyrin IX + Fe(2+). It participates in porphyrin-containing compound metabolism; protoheme biosynthesis; protoheme from protoporphyrin-IX: step 1/1. Catalyzes the ferrous insertion into protoporphyrin IX. The polypeptide is Ferrochelatase (Acinetobacter baumannii (strain AB307-0294)).